We begin with the raw amino-acid sequence, 167 residues long: Calcium-binding protein CML19 (167 aa).

4 EF-hand domains span residues 23–58, 59–94, 96–131, and 132–167; these read QKRREIREIFDLFDIDGSGSIDASELNVAMRSLGFE, MNNQQINELMAEVDKNQSGAIDFDEFVHMMTTKFGE, DSIDELSKAFKIIDHDNNGKISPRDIKMIAKELGEN, and FTDNDIEEMIEEADRDKDGEVNLEEFMKMMKRTSYG. Ca(2+) is bound by residues D36, D38, S40, S42, E47, D72, N74, S76, E83, D109, D111, N113, K115, D120, D145, D147, D149, E151, and E156.

This sequence belongs to the centrin family. As to quaternary structure, interacts with RAD4. Calcium is required for this interaction. Interacts with SAC3B. As to expression, expressed in leaves, roots, and at lower level in stems. Barely detectable in flower buds and flowers.

The protein localises to the cytoplasm. It localises to the nucleus. Functionally, potential calcium sensor that binds calcium in vitro. Modulates homologous recombination and nucleotide excision repair (NER). Involved in the early response to UV irradiation. In Arabidopsis thaliana (Mouse-ear cress), this protein is Calcium-binding protein CML19.